The primary structure comprises 157 residues: Ribosome maturation factor RimP (157 aa).

It belongs to the RimP family.

It is found in the cytoplasm. Functionally, required for maturation of 30S ribosomal subunits. This is Ribosome maturation factor RimP from Enterococcus faecalis (strain ATCC 700802 / V583).